A 242-amino-acid chain; its full sequence is ATP synthase subunit a (242 aa).

7 helical membrane-spanning segments follow: residues 23 to 43 (ISFT…AVLL), 62 to 82 (VELI…VGGL), 84 to 104 (YIPF…IGIL), 113 to 133 (HVSV…VLGF), 143 to 163 (IFLP…IKLF), 176 to 196 (LAAN…FVLK), and 201 to 221 (LAPL…FVAI).

This sequence belongs to the ATPase A chain family. F-type ATPases have 2 components, CF(1) - the catalytic core - and CF(0) - the membrane proton channel. CF(1) has five subunits: alpha(3), beta(3), gamma(1), delta(1), epsilon(1). CF(0) has three main subunits: a(1), b(2) and c(9-12). The alpha and beta chains form an alternating ring which encloses part of the gamma chain. CF(1) is attached to CF(0) by a central stalk formed by the gamma and epsilon chains, while a peripheral stalk is formed by the delta and b chains.

The protein localises to the cell inner membrane. In terms of biological role, key component of the proton channel; it plays a direct role in the translocation of protons across the membrane. The protein is ATP synthase subunit a of Anaplasma phagocytophilum (strain HZ).